The following is a 505-amino-acid chain: Lysine--tRNA ligase (505 aa).

Glu-415 and Glu-422 together coordinate Mg(2+).

Belongs to the class-II aminoacyl-tRNA synthetase family. Homodimer. Requires Mg(2+) as cofactor.

Its subcellular location is the cytoplasm. The catalysed reaction is tRNA(Lys) + L-lysine + ATP = L-lysyl-tRNA(Lys) + AMP + diphosphate. This is Lysine--tRNA ligase from Cronobacter sakazakii (strain ATCC BAA-894) (Enterobacter sakazakii).